We begin with the raw amino-acid sequence, 1261 residues long: SNF2 domain-containing protein CLASSY 2 (1261 aa).

Residues 458 to 479 (FQKRTSRSSRSVAPKTEDSDEP) form a disordered region. The 201-residue stretch at 704-904 (DPTSGNIGGC…FNTLCLARPK (201 aa)) folds into the Helicase ATP-binding domain. 717–724 (HSPGAGKT) contacts ATP. The DEAH box motif lies at 855-858 (DEGH). The 166-residue stretch at 1067 to 1232 (FVLNLIFRVV…DPSLWQAEKI (166 aa)) folds into the Helicase C-terminal domain.

It belongs to the helicase family. As to quaternary structure, interacts with NRPD1 and SHH1.

It is found in the nucleus. Its function is as follows. Probable chromatin remodeling factor. The protein is SNF2 domain-containing protein CLASSY 2 (CLSY2) of Arabidopsis thaliana (Mouse-ear cress).